The chain runs to 60 residues: Prokaryotic ubiquitin-like protein UBact (60 aa).

The segment at 1 to 60 is disordered; the sequence is MPERKTQPTTDQPWTKPNDGGDESGPRSPEVERPNTRDLLERMKRVDPRQARRYRQRSGE. Basic and acidic residues predominate over residues 29-50; sequence PEVERPNTRDLLERMKRVDPRQ. Positions 51–60 are enriched in basic residues; sequence ARRYRQRSGE. An Isoglutamyl lysine isopeptide (Glu-Lys) (interchain with K-? in acceptor proteins) cross-link involves residue E60.

It belongs to the ubiquitin-like protein UBact family.

Functionally, may function as a protein modifier covalently attached to lysine residues of substrate proteins. This may serve to target the modified proteins for degradation by proteasomes. The chain is Prokaryotic ubiquitin-like protein UBact from Fraserbacteria sp. (strain RBG_16_55_9).